Reading from the N-terminus, the 530-residue chain is Methionine--tRNA ligase (530 aa).

A 'HIGH' region motif is present at residues 18 to 28; sequence YYVNDVPHIGS. The Zn(2+) site is built by Cys-133, Cys-136, Cys-151, and His-154. The 'KMSKS' region motif lies at 307-311; sequence KMGKS. Lys-310 is a binding site for ATP.

This sequence belongs to the class-I aminoacyl-tRNA synthetase family. MetG type 2A subfamily. Monomer. Zn(2+) serves as cofactor.

The protein resides in the cytoplasm. It carries out the reaction tRNA(Met) + L-methionine + ATP = L-methionyl-tRNA(Met) + AMP + diphosphate. Functionally, is required not only for elongation of protein synthesis but also for the initiation of all mRNA translation through initiator tRNA(fMet) aminoacylation. The chain is Methionine--tRNA ligase from Nostoc sp. (strain PCC 7120 / SAG 25.82 / UTEX 2576).